Reading from the N-terminus, the 548-residue chain is DNA ligase (548 aa).

Residue E196 participates in ATP binding. The N6-AMP-lysine intermediate role is filled by K198. Positions 203, 218, 250, and 284 each coordinate ATP. E250 serves as a coordination point for a divalent metal cation. E345 contacts a divalent metal cation. ATP-binding residues include R361 and K365. Residues 515–548 (EQLIRNSQENTKKTFARLATTYDGPSPNKKLKLN) form a disordered region.

This sequence belongs to the ATP-dependent DNA ligase family. The cofactor is a divalent metal cation.

It carries out the reaction ATP + (deoxyribonucleotide)n-3'-hydroxyl + 5'-phospho-(deoxyribonucleotide)m = (deoxyribonucleotide)n+m + AMP + diphosphate.. Its function is as follows. Able to ligate a double-stranded synthetic DNA substrate containing a single nick and inefficiently ligated a 1 nucleotide gap but did not ligate a 2 nucleotide gap. It is able to ligate short, complementary overhangs but not blunt-ended double-stranded DNA. May be implicated in DNA repair and recombination. In Lepidoptera (butterflies and moths), this protein is DNA ligase (LIG).